Consider the following 195-residue polypeptide: MPFQDVSAPVRGGILHTARLVHTSDLDQETREGARRMVIEAFEGDFSDADWEHALGGMHAFICHHGALIAHAAVVQRRLLYRDTALRCGYVEAVAVREDWRGQGLATAVMDAVEQVLRGAYQLGALSASDTARGMYLSRGWLPWQGPTSVLQPAGVTRTPEDDEGLFVLPVGLPAGMELDTTAEITCDWRDGDVW.

In terms of domain architecture, N-acetyltransferase spans 21 to 180; sequence VHTSDLDQET…VGLPAGMELD (160 aa). Residues Asp-45 and 92 to 93 contribute to the substrate site; that span reads EA. CoA contacts are provided by residues 94–96 and 101–106; these read VAV and RGQGLA. Substrate contacts are provided by residues Ser-127 and 161-162; that span reads ED.

This sequence belongs to the AAC(2')-I acetyltransferase family. In terms of assembly, homodimer.

Its function is as follows. Confers resistance to gentamicin, tobramycin, dibekacin, netilmicin, and 6'-N-ethylnetilmicin. The chain is Aminoglycoside 2'-N-acetyltransferase (aac) from Mycolicibacterium fortuitum (Mycobacterium fortuitum).